Here is a 507-residue protein sequence, read N- to C-terminus: ATP synthase subunit alpha, chloroplastic (507 aa).

170 to 177 (GDRQTGKT) contributes to the ATP binding site. A Phosphothreonine modification is found at Thr-257.

The protein belongs to the ATPase alpha/beta chains family. As to quaternary structure, F-type ATPases have 2 components, CF(1) - the catalytic core - and CF(0) - the membrane proton channel. CF(1) has five subunits: alpha(3), beta(3), gamma(1), delta(1), epsilon(1). CF(0) has four main subunits: a, b, b' and c.

It is found in the plastid. The protein localises to the chloroplast thylakoid membrane. The enzyme catalyses ATP + H2O + 4 H(+)(in) = ADP + phosphate + 5 H(+)(out). Functionally, produces ATP from ADP in the presence of a proton gradient across the membrane. The alpha chain is a regulatory subunit. This is ATP synthase subunit alpha, chloroplastic from Arabis hirsuta (Hairy rock-cress).